A 587-amino-acid chain; its full sequence is Arginine--tRNA ligase (587 aa).

The 'HIGH' region signature appears at P127 to H137.

The protein belongs to the class-I aminoacyl-tRNA synthetase family. In terms of assembly, monomer.

It localises to the cytoplasm. The enzyme catalyses tRNA(Arg) + L-arginine + ATP = L-arginyl-tRNA(Arg) + AMP + diphosphate. In Pseudomonas paraeruginosa (strain DSM 24068 / PA7) (Pseudomonas aeruginosa (strain PA7)), this protein is Arginine--tRNA ligase.